Here is a 599-residue protein sequence, read N- to C-terminus: Zinc metalloproteinase dpy-31 (599 aa).

The signal sequence occupies residues 1–22 (MALLKPFLSRTFSSFFATITGG). The propeptide occupies 23-211 (RNLIDSIEEL…IQHGRRTKRK (189 aa)). One can recognise a Peptidase M12A domain in the interval 211–410 (KFIRSELRRW…IRLMNVIYCS (200 aa)). Asparagine 251 carries N-linked (GlcNAc...) asparagine glycosylation. Cystine bridges form between cysteine 254-cysteine 409, cysteine 277-cysteine 298, cysteine 413-cysteine 433, cysteine 435-cysteine 444, and cysteine 455-cysteine 483. Zn(2+) is bound at residue histidine 306. Glutamate 307 is a catalytic residue. The Zn(2+) site is built by histidine 310 and histidine 316. One can recognise an EGF-like domain in the interval 405 to 445 (NVIYCSDSCAQKLPCQRGGYTDPRRCGRCRCPDGFTGKLCE). Positions 455-571 (CGGRIELTSS…KGFQAQVRAL (117 aa)) constitute a CUB domain. An N-linked (GlcNAc...) asparagine glycan is attached at asparagine 522.

Zn(2+) is required as a cofactor.

Its subcellular location is the secreted. Inhibited by marimastat and tripeptide hydroxamic acids. Its function is as follows. Metalloprotease which cleaves the carboxyl terminus of procollagens to mature collagens. Probably involved in cuticular collagen maturation. The chain is Zinc metalloproteinase dpy-31 from Brugia malayi (Filarial nematode worm).